The chain runs to 876 residues: Alanine--tRNA ligase (876 aa).

K74 carries the N6-acetyllysine modification. 4 residues coordinate Zn(2+): H564, H568, C666, and H670.

This sequence belongs to the class-II aminoacyl-tRNA synthetase family. Homotetramer. Requires Zn(2+) as cofactor.

The protein localises to the cytoplasm. The catalysed reaction is tRNA(Ala) + L-alanine + ATP = L-alanyl-tRNA(Ala) + AMP + diphosphate. Catalyzes the attachment of alanine to tRNA(Ala) in a two-step reaction: alanine is first activated by ATP to form Ala-AMP and then transferred to the acceptor end of tRNA(Ala). Also edits incorrectly charged Ser-tRNA(Ala) and Gly-tRNA(Ala) via its editing domain. The protein is Alanine--tRNA ligase of Escherichia coli (strain ATCC 8739 / DSM 1576 / NBRC 3972 / NCIMB 8545 / WDCM 00012 / Crooks).